The sequence spans 418 residues: Serine hydroxymethyltransferase (418 aa).

Residues Leu121 and 125-127 (GHL) each bind (6S)-5,6,7,8-tetrahydrofolate. Lys230 bears the N6-(pyridoxal phosphate)lysine mark. 355 to 357 (SPF) lines the (6S)-5,6,7,8-tetrahydrofolate pocket.

The protein belongs to the SHMT family. Homodimer. The cofactor is pyridoxal 5'-phosphate.

The protein resides in the cytoplasm. It carries out the reaction (6R)-5,10-methylene-5,6,7,8-tetrahydrofolate + glycine + H2O = (6S)-5,6,7,8-tetrahydrofolate + L-serine. It participates in one-carbon metabolism; tetrahydrofolate interconversion. The protein operates within amino-acid biosynthesis; glycine biosynthesis; glycine from L-serine: step 1/1. In terms of biological role, catalyzes the reversible interconversion of serine and glycine with tetrahydrofolate (THF) serving as the one-carbon carrier. This reaction serves as the major source of one-carbon groups required for the biosynthesis of purines, thymidylate, methionine, and other important biomolecules. Also exhibits THF-independent aldolase activity toward beta-hydroxyamino acids, producing glycine and aldehydes, via a retro-aldol mechanism. This Streptococcus pyogenes serotype M1 protein is Serine hydroxymethyltransferase.